Reading from the N-terminus, the 476-residue chain is Glycogen synthase (476 aa).

Lys15 serves as a coordination point for ADP-alpha-D-glucose.

This sequence belongs to the glycosyltransferase 1 family. Bacterial/plant glycogen synthase subfamily.

It catalyses the reaction [(1-&gt;4)-alpha-D-glucosyl](n) + ADP-alpha-D-glucose = [(1-&gt;4)-alpha-D-glucosyl](n+1) + ADP + H(+). Its pathway is glycan biosynthesis; glycogen biosynthesis. In terms of biological role, synthesizes alpha-1,4-glucan chains using ADP-glucose. The protein is Glycogen synthase of Bacillus cereus (strain Q1).